Reading from the N-terminus, the 343-residue chain is L-threonine 3-dehydrogenase (343 aa).

A Zn(2+)-binding site is contributed by Cys-38. Active-site charge relay system residues include Thr-40 and His-43. The Zn(2+) site is built by His-63, Glu-64, Cys-93, Cys-96, Cys-99, and Cys-107. NAD(+) contacts are provided by residues Ile-175, Asp-195, Arg-200, 262-264, and 286-287; these read LGI and IY.

The protein belongs to the zinc-containing alcohol dehydrogenase family. Homotetramer. Zn(2+) is required as a cofactor.

Its subcellular location is the cytoplasm. It carries out the reaction L-threonine + NAD(+) = (2S)-2-amino-3-oxobutanoate + NADH + H(+). The protein operates within amino-acid degradation; L-threonine degradation via oxydo-reductase pathway; glycine from L-threonine: step 1/2. In terms of biological role, catalyzes the NAD(+)-dependent oxidation of L-threonine to 2-amino-3-ketobutyrate. The polypeptide is L-threonine 3-dehydrogenase (Burkholderia mallei (strain NCTC 10247)).